Reading from the N-terminus, the 413-residue chain is MTPSISWGLLLLAGLCCMVPSFLAEDVQETDTSQKDQSPASHEIATNLGDFAISLYRELVHQSNTSNIFFSPVSIATAFAMLSLGSKGDTHTQILEGLQFNLTQTSEADIHKSFQHLLQTLNRPDSELQLSTGNGLFVNNDLKLVEKFLEEAKNHYQAEVFSVNFAESEEAKKVINDFVEKGTQGKIVEAVKELDQDTVFALANYILFKGKWKKPFDPENTEEAEFHVDKSTTVKVPMMMLSGMLDVHHCSILSSWVLLMDYAGNASAVFLLPEDGKMQHLEQTLNKELISKILLNRRRRLVQIHIPRLSISGDYNLKTLMSPLGITRIFNNGADLSGITEENAPLKLSKAVHKAVLTIDETGTEAAAATVFEAVPMSMPPILRFDHPFLFIIFEEHTQSPIFVGKVVDPTHK.

The N-terminal stretch at M1 to A24 is a signal peptide. N-linked (GlcNAc...) asparagine glycosylation is found at N64, N101, and N265. Residues A368 to H387 are RCL.

Belongs to the serpin family.

The protein localises to the secreted. In terms of biological role, inhibitor of serine proteases. Its primary target is elastase, but it also has a moderate affinity for plasmin and thrombin. In Mus musculus (Mouse), this protein is Alpha-1-antitrypsin 1-2 (Serpina1b).